The following is a 153-amino-acid chain: MAEEHDEAVRVAELRKKRSFRTFAYRGVELEQLLDLSAEQLVDLFHARARRRMLRGLGPNASRFIRKLRKAKTEAPLNEKPATVKTHLRNMIILPEMVGSVVGIYNGKLFNQVEIRPEMIGHYLGEFSITYKPTKHGRPGIGATHSSRFIPLK.

Belongs to the universal ribosomal protein uS19 family. In terms of assembly, component of the small ribosomal subunit (SSU). Mature yeast ribosomes consist of a small (40S) and a large (60S) subunit. The 40S small subunit contains 1 molecule of ribosomal RNA (18S rRNA) and at least 33 different proteins. The large 60S subunit contains 3 rRNA molecules (25S, 5.8S and 5S rRNA) and at least 46 different proteins.

It is found in the cytoplasm. The protein localises to the nucleus. It localises to the nucleolus. In terms of biological role, component of the ribosome, a large ribonucleoprotein complex responsible for the synthesis of proteins in the cell. The small ribosomal subunit (SSU) binds messenger RNAs (mRNAs) and translates the encoded message by selecting cognate aminoacyl-transfer RNA (tRNA) molecules. The large subunit (LSU) contains the ribosomal catalytic site termed the peptidyl transferase center (PTC), which catalyzes the formation of peptide bonds, thereby polymerizing the amino acids delivered by tRNAs into a polypeptide chain. The nascent polypeptides leave the ribosome through a tunnel in the LSU and interact with protein factors that function in enzymatic processing, targeting, and the membrane insertion of nascent chains at the exit of the ribosomal tunnel. uS19 is involved in the nuclear export of the small ribosomal subunit precursor. Has a role in the late stage of the assembly of pre-40S particles within the nucleus and controls their export to the cytoplasm. The chain is Small ribosomal subunit protein uS19A (rps1501) from Schizosaccharomyces pombe (strain 972 / ATCC 24843) (Fission yeast).